The sequence spans 242 residues: Basic agglutinin (242 aa).

Residues N45 and N220 are each glycosylated (N-linked (GlcNAc...) asparagine).

Belongs to the leguminous lectin family.

Its function is as follows. Lectin. The polypeptide is Basic agglutinin (WBAI) (Psophocarpus tetragonolobus (Winged bean)).